A 446-amino-acid chain; its full sequence is Argininosuccinate lyase (446 aa).

The protein belongs to the lyase 1 family. Argininosuccinate lyase subfamily.

It is found in the cytoplasm. It catalyses the reaction 2-(N(omega)-L-arginino)succinate = fumarate + L-arginine. Its pathway is amino-acid biosynthesis; L-arginine biosynthesis; L-arginine from L-ornithine and carbamoyl phosphate: step 3/3. The polypeptide is Argininosuccinate lyase (Sulfurisphaera tokodaii (strain DSM 16993 / JCM 10545 / NBRC 100140 / 7) (Sulfolobus tokodaii)).